Reading from the N-terminus, the 469-residue chain is Pancreatic lipase-related protein 2 (469 aa).

Positions 1 to 17 (MLPSWTIGLLLLATVRG) are cleaved as a signal peptide. A disulfide bridge links Cys-21 with Cys-27. Residue Asn-71 is glycosylated (N-linked (GlcNAc...) asparagine). The interval 93–105 (IHGFIDDGDSGWP) is required for galactolipase activity. Cys-109 and Cys-120 form a disulfide bridge. The active-site Nucleophile is the Ser-171. The active-site Charge relay system is the Asp-195. Glu-206, Arg-209, Asp-211, and Asp-214 together coordinate Ca(2+). Cysteines 256 and 280 form a disulfide. Residues 257-279 (QKNILSTIIDINGIWQGIQDFVA) form a required for galactolipase activity region. His-282 functions as the Charge relay system in the catalytic mechanism. 2 cysteine pairs are disulfide-bonded: Cys-304–Cys-315 and Cys-318–Cys-323. N-linked (GlcNAc...) asparagine glycosylation is found at Asn-353, Asn-399, and Asn-455. Residues 357-469 (WRYRVSVTLA…ENALQTLYPC (113 aa)) enclose the PLAT domain. The cysteines at positions 453 and 469 are disulfide-linked.

Belongs to the AB hydrolase superfamily. Lipase family.

It localises to the secreted. The protein resides in the zymogen granule membrane. Its subcellular location is the cell projection. It is found in the neuron projection. It catalyses the reaction a triacylglycerol + H2O = a diacylglycerol + a fatty acid + H(+). The catalysed reaction is a 1,2-diacyl-3-O-(beta-D-galactosyl)-sn-glycerol + 2 H2O = 3-beta-D-galactosyl-sn-glycerol + 2 a fatty acid + 2 H(+). It carries out the reaction 1,2,3-tri-(9Z-octadecenoyl)-glycerol + H2O = di-(9Z)-octadecenoylglycerol + (9Z)-octadecenoate + H(+). The enzyme catalyses di-(9Z)-octadecenoylglycerol + H2O = (9Z-octadecenoyl)-glycerol + (9Z)-octadecenoate + H(+). It catalyses the reaction (9Z-octadecenoyl)-glycerol + H2O = glycerol + (9Z)-octadecenoate + H(+). The catalysed reaction is 1-(9Z-octadecenoyl)-glycerol + H2O = glycerol + (9Z)-octadecenoate + H(+). It carries out the reaction 1,2,3-tripropanoylglycerol + H2O = dipropanoylglycerol + propanoate + H(+). The enzyme catalyses 1,2,3-tributanoylglycerol + H2O = dibutanoylglycerol + butanoate + H(+). It catalyses the reaction 1,2,3-trioctanoylglycerol + H2O = dioctanoylglycerol + octanoate + H(+). The catalysed reaction is 1,2-didecanoylglycerol + H2O = decanoylglycerol + decanoate + H(+). It carries out the reaction long chain 1,2-diacyl-3-O-beta-D-galactosyl-sn-glycerol + H2O = long chain acyl-3-O-beta-D-galactosyl-sn-glycerol + a fatty acid + H(+). The enzyme catalyses 1,2-dioctanoyl-3-O-beta-D-galactosyl-sn-glycerol + H2O = octanoyl-3-(beta-D-galactosyl)-sn-glycerol + octanoate + H(+). It catalyses the reaction 1,2-didodecanoyl-3-beta-D-galactosyl-sn-glycerol + H2O = dodecanoyl-3-beta-D-galactosyl-sn-glycerol + dodecanoate + H(+). The catalysed reaction is 1-beta-D-galactosyl-2,3-didodecanoyl-sn-glycerol + H2O = 1-beta-D-galactosyl-dodecanoyl-sn-glycerol + dodecanoate + H(+). It carries out the reaction a 1,2-diacyl-3-O-[alpha-D-galactosyl-(1-&gt;6)-beta-D-galactosyl]-sn-glycerol + H2O = acyl-3-O-[alpha-D-galactosyl-(1-&gt;6)-beta-D-galactosyl]-sn-glycerol + a fatty acid + H(+). The enzyme catalyses long chain 1,2-diacyl-3-O-[alpha-D-galactosyl-(1-&gt;6)-beta-D-galactosyl]-sn-glycerol + H2O = long chain acyl-3-O-[alpha-D-galactosyl-(1-&gt;6)-beta-D-galactosyl]-sn-glycerol + a fatty acid + H(+). It catalyses the reaction 1,2-dioctanoyl-3-O-[alpha-D-galactosyl-(1-&gt;6)-beta-D-galactosyl]-sn-glycerol + H2O = octanoyl-3-O-[alpha-D-galactosyl-(1-&gt;6)-beta-D-galactosyl]-sn-glycerol + octanoate + H(+). The catalysed reaction is 1,2-didodecanoyl-3-O-[alpha-D-galactosyl-(1-&gt;6)-beta-D-galactosyl]-sn-glycerol + H2O = dodecanoyl-3-O-[alpha-D-galactosyl-(1-&gt;6)-beta-D-galactosyl]-sn-glycerol + dodecanoate + H(+). It carries out the reaction a 1,2-diacyl-sn-glycero-3-phosphocholine + H2O = a monoacyl-sn-glycero-3-phosphocholine + a fatty acid + H(+). The protein operates within glycerolipid metabolism; triacylglycerol degradation. It participates in glycolipid metabolism. Its function is as follows. Lipase that primarily hydrolyzes triglycerides and galactosylglycerides. In neonates, may play a major role in pancreatic digestion of dietary fats such as milk fat globules enriched in long-chain triglycerides. Hydrolyzes short-, medium- and long-chain fatty acyls in triglycerides without apparent positional specificity. Can completely deacylate triacylglycerols. When the liver matures and bile salt synthesis increases, likely functions mainly as a galactolipase and monoacylglycerol lipase. Hydrolyzes monogalactosyldiglycerols (MGDG) and digalactosyldiacylglycerols (DGDG) present in a plant-based diet, releasing long-chain polyunsaturated fatty acids. Hydrolyzes medium- and long-chain fatty acyls in galactolipids. May act together with LIPF to hydrolyze partially digested triglycerides. Hydrolyzes long-chain monoglycerides with high efficiency. In cytotoxic T cells, contributes to perforin-dependent cell lysis, but is unlikely to mediate direct cytotoxicity. Also has low phospholipase activity. In neurons, required for the localization of the phospholipid 1-oleoyl-2-palmitoyl-PC (OPPC) to neurite tips through acyl chain remodeling of membrane phospholipids. The resulting OPPC-rich lipid membrane domain recruits the t-SNARE protein STX4 by selectively interacting with the STX4 transmembrane domain and this promotes surface expression of the dopamine transporter SLC6A3/DAT at neurite tips by facilitating fusion of SLC6A3-containing transport vesicles with the plasma membrane. The protein is Pancreatic lipase-related protein 2 of Bos taurus (Bovine).